A 227-amino-acid polypeptide reads, in one-letter code: Cleavage and polyadenylation specificity factor subunit 5 (227 aa).

The Nudix hydrolase domain maps to 76–201 (MRRTVEGVLI…KLVAAPLFEL (126 aa)). An interaction with RNA region spans residues 102 to 104 (TFF). Residues 109–130 (GELNPGEDEVEGLKRLMTEILG) carry the Nudix box motif.

It belongs to the Nudix hydrolase family. CPSF5 subfamily. Homodimer (via N- and C-terminus); binds RNA as homodimer. Component of the cleavage factor Im (CFIm) complex.

Its subcellular location is the nucleus. The protein resides in the cytoplasm. In terms of biological role, component of the cleavage factor Im (CFIm) complex that functions as an activator of the pre-mRNA 3'-end cleavage and polyadenylation processing required for the maturation of pre-mRNA into functional mRNAs. CFIm contributes to the recruitment of multiprotein complexes on specific sequences on the pre-mRNA 3'-end, so called cleavage and polyadenylation signals (pA signals). Most pre-mRNAs contain multiple pA signals, resulting in alternative cleavage and polyadenylation (APA) producing mRNAs with variable 3'-end formation. The CFIm complex acts as a key regulator of cleavage and polyadenylation site choice during APA through its binding to 5'-UGUA-3' elements localized in the 3'-untranslated region (UTR) for a huge number of pre-mRNAs. Binds to 5'-UGUA-3' elements localized upstream of pA signals that act as enhancers of pre-mRNA 3'-end processing. The homodimer mediates simultaneous sequence-specific recognition of two 5'-UGUA-3' elements within the pre-mRNA. Plays a role in somatic cell fate transitions and pluripotency by regulating widespread changes in gene expression through an APA-dependent function. Binds to chromatin. Binds to, but does not hydrolyze mono- and di-adenosine nucleotides. This chain is Cleavage and polyadenylation specificity factor subunit 5, found in Xenopus laevis (African clawed frog).